The following is a 281-amino-acid chain: Pre T-cell antigen receptor alpha (281 aa).

Residues 1–23 form the signal peptide; it reads MAGTWLLLLLALGCPALPTGVGG. At 24–146 the chain is on the extracellular side; that stretch reads TPFPSLAPPI…QEPLRGTPGG (123 aa). Residues cysteine 47 and cysteine 107 are joined by a disulfide bond. Asparagine 67 carries N-linked (GlcNAc...) asparagine glycosylation. Residues 147-167 traverse the membrane as a helical segment; that stretch reads ALWLGVLRLLLFKLLLFDLLL. Topologically, residues 168-281 are cytoplasmic; sequence TCSCLCDPAG…LPPPLQAGAA (114 aa). Residues 196–233 are disordered; that stretch reads LHPATETGGREATSSPRPQPRDRRWGDTPPGRKPGSPV.

As to quaternary structure, heterodimer with TCRB; disulfide linked. This heterodimer assembles with CD3 proteins into a signaling-competent pre-T-cell receptor complex. Interacts with RHBDD1. In terms of tissue distribution, expressed in immature but not mature T-cells. Also found in CD34+ cells from peripheral blood, CD34+ precursors from umbilical cord blood and adult bone marrow.

It is found in the membrane. It localises to the cell membrane. Its function is as follows. Component of the pre-T-cell receptor complex (composed of PTCRA, TCRB and the CD3 complex) that has a crucial role in early T-cell development, particularly alpha-beta T cell differentiation. The chain is Pre T-cell antigen receptor alpha from Homo sapiens (Human).